The chain runs to 319 residues: Cytochrome f (319 aa).

The N-terminal stretch at Met-1 to Ala-35 is a signal peptide. Heme-binding residues include Tyr-36, Cys-56, Cys-59, and His-60. The chain crosses the membrane as a helical span at residues Val-285–Lys-305.

This sequence belongs to the cytochrome f family. As to quaternary structure, the 4 large subunits of the cytochrome b6-f complex are cytochrome b6, subunit IV (17 kDa polypeptide, petD), cytochrome f and the Rieske protein, while the 4 small subunits are PetG, PetL, PetM and PetN. The complex functions as a dimer. Heme serves as cofactor.

The protein localises to the plastid. It localises to the chloroplast thylakoid membrane. Functionally, component of the cytochrome b6-f complex, which mediates electron transfer between photosystem II (PSII) and photosystem I (PSI), cyclic electron flow around PSI, and state transitions. This chain is Cytochrome f, found in Coffea arabica (Arabian coffee).